Consider the following 283-residue polypeptide: Protein BASIC PENTACYSTEINE1 (283 aa).

The tract at residues 111-170 is disordered; it reads RFEENPIPPPAPCEEQTGKKRKMRGSIATPTVPKAKKMRKPKEERDVTNNNVQQQQQRVK. The segment covering 158–169 has biased composition (low complexity); sequence TNNNVQQQQQRV.

Belongs to the BBR/BPC family. In terms of tissue distribution, expressed in seedlings, leaves and pistils. Detected in the base of flowers and tips of carpels, in leaf and sepal vasculature, in young rosette, in the lateral and tip of primary roots, and in the whole ovule.

It is found in the nucleus. Its function is as follows. Transcriptional regulator that specifically binds to GA-rich elements (GAGA-repeats) present in regulatory sequences of genes involved in developmental processes. Negatively regulates the homeotic gene AGL11/STK, which controls ovule primordium identity, by a cooperative binding to purine-rich elements present in the regulatory sequence leading to DNA conformational changes. This is Protein BASIC PENTACYSTEINE1 (BPC1) from Arabidopsis thaliana (Mouse-ear cress).